The following is a 929-amino-acid chain: ATP-dependent DNA helicase PIF1 (929 aa).

The N-terminal 52 residues, 1 to 52, are a transit peptide targeting the mitochondrion; it reads MLRRLLQPAYNVALSGTSASTLPRKSASVGLVRTALMPVDYNAGALFCAMRF. Residues 55–89 form a disordered region; sequence GTEKERKREPKRGSKRRSKATTTLSTPTDAQTSVT. Basic and acidic residues predominate over residues 56–66; it reads TEKERKREPKR. Over residues 74–89 the composition is skewed to polar residues; that stretch reads ATTTLSTPTDAQTSVT. An ATP-binding site is contributed by 302-309; that stretch reads GSAGTGKT. Residues 776-796 mediate DNA binding; the sequence is HLLYVAMSRVRNPEQLSMSSF. Residues 902–929 are disordered; it reads HERRQKKMAVEGAKQTDTTKASSGESLE. The span at 916 to 929 shows a compositional bias: polar residues; sequence QTDTTKASSGESLE.

It belongs to the helicase family. PIF1 subfamily. In terms of assembly, monomer. It depends on Mg(2+) as a cofactor.

It localises to the mitochondrion. It carries out the reaction Couples ATP hydrolysis with the unwinding of duplex DNA at the replication fork by translocating in the 5'-3' direction. This creates two antiparallel DNA single strands (ssDNA). The leading ssDNA polymer is the template for DNA polymerase III holoenzyme which synthesizes a continuous strand.. The enzyme catalyses ATP + H2O = ADP + phosphate + H(+). Its function is as follows. DNA-dependent ATPase and probable 5'-3' DNA helicase required for the maintenance of mitochondrial (kinetoplast) genome stability. Essential for replication of kinetoplast minicircles. Involved in the segregation of minicircle progeny. The sequence is that of ATP-dependent DNA helicase PIF1 from Trypanosoma brucei brucei (strain 927/4 GUTat10.1).